The following is a 248-amino-acid chain: tRNA (guanine-N(1)-)-methyltransferase (248 aa).

S-adenosyl-L-methionine contacts are provided by residues G113 and V133–L138.

The protein belongs to the RNA methyltransferase TrmD family. As to quaternary structure, homodimer.

The protein localises to the cytoplasm. The catalysed reaction is guanosine(37) in tRNA + S-adenosyl-L-methionine = N(1)-methylguanosine(37) in tRNA + S-adenosyl-L-homocysteine + H(+). Functionally, specifically methylates guanosine-37 in various tRNAs. This chain is tRNA (guanine-N(1)-)-methyltransferase, found in Shewanella sp. (strain ANA-3).